The sequence spans 181 residues: uncharacterized protein (181 aa).

This is an uncharacterized protein from Acheta domesticus (House cricket).